The primary structure comprises 108 residues: Pyrimidine/purine nucleoside phosphorylase (108 aa).

The protein belongs to the nucleoside phosphorylase PpnP family.

It carries out the reaction a purine D-ribonucleoside + phosphate = a purine nucleobase + alpha-D-ribose 1-phosphate. The catalysed reaction is adenosine + phosphate = alpha-D-ribose 1-phosphate + adenine. The enzyme catalyses cytidine + phosphate = cytosine + alpha-D-ribose 1-phosphate. It catalyses the reaction guanosine + phosphate = alpha-D-ribose 1-phosphate + guanine. It carries out the reaction inosine + phosphate = alpha-D-ribose 1-phosphate + hypoxanthine. The catalysed reaction is thymidine + phosphate = 2-deoxy-alpha-D-ribose 1-phosphate + thymine. The enzyme catalyses uridine + phosphate = alpha-D-ribose 1-phosphate + uracil. It catalyses the reaction xanthosine + phosphate = alpha-D-ribose 1-phosphate + xanthine. In terms of biological role, catalyzes the phosphorolysis of diverse nucleosides, yielding D-ribose 1-phosphate and the respective free bases. Can use uridine, adenosine, guanosine, cytidine, thymidine, inosine and xanthosine as substrates. Also catalyzes the reverse reactions. The sequence is that of Pyrimidine/purine nucleoside phosphorylase from Polaromonas naphthalenivorans (strain CJ2).